We begin with the raw amino-acid sequence, 144 residues long: Transcriptional regulator SlyA (144 aa).

The region spanning E2 to K135 is the HTH marR-type domain. The H-T-H motif DNA-binding region spans Q49–E72.

It belongs to the SlyA family. In terms of assembly, homodimer.

Transcription regulator that can specifically activate or repress expression of target genes. This Blochmanniella pennsylvanica (strain BPEN) protein is Transcriptional regulator SlyA.